Reading from the N-terminus, the 561-residue chain is DNA ligase B (561 aa).

Lys-125 acts as the N6-AMP-lysine intermediate in catalysis.

This sequence belongs to the NAD-dependent DNA ligase family. LigB subfamily.

The catalysed reaction is NAD(+) + (deoxyribonucleotide)n-3'-hydroxyl + 5'-phospho-(deoxyribonucleotide)m = (deoxyribonucleotide)n+m + AMP + beta-nicotinamide D-nucleotide.. Catalyzes the formation of phosphodiester linkages between 5'-phosphoryl and 3'-hydroxyl groups in double-stranded DNA using NAD as a coenzyme and as the energy source for the reaction. This is DNA ligase B from Salmonella newport (strain SL254).